A 135-amino-acid chain; its full sequence is uncharacterized protein (135 aa).

This is an uncharacterized protein from Mycoplasma pneumoniae (strain ATCC 29342 / M129 / Subtype 1) (Mycoplasmoides pneumoniae).